A 493-amino-acid chain; its full sequence is UDP-N-acetylmuramoyl-L-alanyl-D-glutamate--2,6-diaminopimelate ligase (493 aa).

Residues leucine 30 and serine 32 each contribute to the UDP-N-acetyl-alpha-D-muramoyl-L-alanyl-D-glutamate site. Residue glycine 117–threonine 123 participates in ATP binding. Residues asparagine 158, threonine 159 to threonine 160, serine 186, glutamine 192, and arginine 194 contribute to the UDP-N-acetyl-alpha-D-muramoyl-L-alanyl-D-glutamate site. At lysine 226 the chain carries N6-carboxylysine. Meso-2,6-diaminopimelate-binding positions include arginine 388, aspartate 412 to arginine 415, glycine 463, and glutamate 467. The Meso-diaminopimelate recognition motif motif lies at aspartate 412 to arginine 415.

This sequence belongs to the MurCDEF family. MurE subfamily. Requires Mg(2+) as cofactor. Carboxylation is probably crucial for Mg(2+) binding and, consequently, for the gamma-phosphate positioning of ATP.

It localises to the cytoplasm. It catalyses the reaction UDP-N-acetyl-alpha-D-muramoyl-L-alanyl-D-glutamate + meso-2,6-diaminopimelate + ATP = UDP-N-acetyl-alpha-D-muramoyl-L-alanyl-gamma-D-glutamyl-meso-2,6-diaminopimelate + ADP + phosphate + H(+). The protein operates within cell wall biogenesis; peptidoglycan biosynthesis. Functionally, catalyzes the addition of meso-diaminopimelic acid to the nucleotide precursor UDP-N-acetylmuramoyl-L-alanyl-D-glutamate (UMAG) in the biosynthesis of bacterial cell-wall peptidoglycan. The chain is UDP-N-acetylmuramoyl-L-alanyl-D-glutamate--2,6-diaminopimelate ligase from Vibrio parahaemolyticus serotype O3:K6 (strain RIMD 2210633).